Here is a 201-residue protein sequence, read N- to C-terminus: MTTTVGIAVREGVVLATDKRVTAGYYIAHKQGEKIWKIDDHVAATMSGGVADLQSVLSFLTLRAREYKMEYKRPIPIRALVNYVSLILFYSRPYIYIVHSIIGGVDDEEGAVLYMADWLGTVTKERYIATGSGSPYAKGALEVGYREDMSLEDAVDLAIKAVKAAIRNDPGSGEGIDVVVITKREGFRRVFTAQQKIVLAE.

Residue M1 is a propeptide, removed in mature form; by autocatalysis. Residue T2 is the Nucleophile of the active site.

It belongs to the peptidase T1B family. As to quaternary structure, the 20S proteasome core is composed of 14 alpha and 14 beta subunits that assemble into four stacked heptameric rings, resulting in a barrel-shaped structure. The two inner rings, each composed of seven catalytic beta subunits, are sandwiched by two outer rings, each composed of seven alpha subunits. The catalytic chamber with the active sites is on the inside of the barrel. Has a gated structure, the ends of the cylinder being occluded by the N-termini of the alpha-subunits. Is capped at one or both ends by the proteasome regulatory ATPase, PAN.

It localises to the cytoplasm. The catalysed reaction is Cleavage of peptide bonds with very broad specificity.. Its activity is regulated as follows. The formation of the proteasomal ATPase PAN-20S proteasome complex, via the docking of the C-termini of PAN into the intersubunit pockets in the alpha-rings, triggers opening of the gate for substrate entry. Interconversion between the open-gate and close-gate conformations leads to a dynamic regulation of the 20S proteasome proteolysis activity. In terms of biological role, component of the proteasome core, a large protease complex with broad specificity involved in protein degradation. This is Proteasome subunit beta 1 from Pyrobaculum neutrophilum (strain DSM 2338 / JCM 9278 / NBRC 100436 / V24Sta) (Thermoproteus neutrophilus).